The primary structure comprises 431 residues: Signal recognition particle 54 kDa protein (431 aa).

Residues 105–112, 185–189, and 243–246 contribute to the GTP site; these read GVEGSGKT, DTAGR, and TKMD.

It belongs to the GTP-binding SRP family. SRP54 subfamily. In terms of assembly, part of the signal recognition particle protein translocation system, which is composed of SRP and FtsY. Archaeal SRP consists of a 7S RNA molecule of 300 nucleotides and two protein subunits: SRP54 and SRP19.

The protein localises to the cytoplasm. It carries out the reaction GTP + H2O = GDP + phosphate + H(+). Involved in targeting and insertion of nascent membrane proteins into the cytoplasmic membrane. Binds to the hydrophobic signal sequence of the ribosome-nascent chain (RNC) as it emerges from the ribosomes. The SRP-RNC complex is then targeted to the cytoplasmic membrane where it interacts with the SRP receptor FtsY. The polypeptide is Signal recognition particle 54 kDa protein (Pyrobaculum calidifontis (strain DSM 21063 / JCM 11548 / VA1)).